We begin with the raw amino-acid sequence, 371 residues long: Aspartate-semialdehyde dehydrogenase (371 aa).

NADP(+) is bound by residues 9–12 (RGMV), 37–38 (TS), and glutamine 73. Arginine 102 is a binding site for phosphate. The active-site Acyl-thioester intermediate is the cysteine 135. Glutamine 162 contacts substrate. NADP(+)-binding positions include 165–166 (SG) and proline 193. A substrate-binding site is contributed by glutamate 241. Residue lysine 244 participates in phosphate binding. Arginine 268 lines the substrate pocket. Histidine 275 acts as the Proton acceptor in catalysis. An NADP(+)-binding site is contributed by glutamine 351.

It belongs to the aspartate-semialdehyde dehydrogenase family. As to quaternary structure, homodimer.

The catalysed reaction is L-aspartate 4-semialdehyde + phosphate + NADP(+) = 4-phospho-L-aspartate + NADPH + H(+). It participates in amino-acid biosynthesis; L-lysine biosynthesis via DAP pathway; (S)-tetrahydrodipicolinate from L-aspartate: step 2/4. The protein operates within amino-acid biosynthesis; L-methionine biosynthesis via de novo pathway; L-homoserine from L-aspartate: step 2/3. It functions in the pathway amino-acid biosynthesis; L-threonine biosynthesis; L-threonine from L-aspartate: step 2/5. Functionally, catalyzes the NADPH-dependent formation of L-aspartate-semialdehyde (L-ASA) by the reductive dephosphorylation of L-aspartyl-4-phosphate. This Neisseria meningitidis serogroup A / serotype 4A (strain DSM 15465 / Z2491) protein is Aspartate-semialdehyde dehydrogenase.